The following is a 79-amino-acid chain: Conotoxin Cl9.4 (79 aa).

The first 23 residues, 1 to 23, serve as a signal peptide directing secretion; it reads MNCYLILTVALLLTSAMTGTTTA. Positions 24–37 are excised as a propeptide; it reads GQLNKKGVTLREDD. 3 cysteine pairs are disulfide-bonded: C41–C58, C46–C68, and C48–C73.

In terms of tissue distribution, expressed by the venom duct.

Its subcellular location is the secreted. The sequence is that of Conotoxin Cl9.4 from Californiconus californicus (California cone).